The primary structure comprises 108 residues: Thioredoxin (108 aa).

The 107-residue stretch at 2–108 folds into the Thioredoxin domain; it reads NKIIELTDQN…LKDFLDENIK (107 aa). Cysteines 32 and 35 form a disulfide.

It belongs to the thioredoxin family.

Participates in various redox reactions through the reversible oxidation of its active center dithiol to a disulfide and catalyzes dithiol-disulfide exchange reactions. In Buchnera aphidicola subsp. Schizaphis graminum (strain Sg), this protein is Thioredoxin (trxA).